We begin with the raw amino-acid sequence, 465 residues long: uncharacterized protein (465 aa).

Disordered regions lie at residues 95 to 173, 407 to 426, and 443 to 465; these read STST…RKDP, QEME…KSDK, and ANPI…SSKK. Basic residues predominate over residues 118 to 137; the sequence is KTGSKKVTRSKKSKKTKRRS. The span at 138-150 shows a compositional bias: low complexity; the sequence is STTVTTTTISNSK. The span at 153 to 173 shows a compositional bias: basic and acidic residues; the sequence is TPDKDKDSKDQRKQRTKRKDP. The span at 451–465 shows a compositional bias: basic residues; the sequence is MARRNRRSKGSSSKK.

This is an uncharacterized protein from Caenorhabditis elegans.